The chain runs to 176 residues: Ferritin, higher subunit (176 aa).

The 150-residue stretch at 7–156 folds into the Ferritin-like diiron domain; sequence QNFHRDCEAA…DYITNLKRLG (150 aa). Fe cation-binding residues include Glu-24, Glu-58, Glu-59, His-62, Glu-104, and Gln-138.

This sequence belongs to the ferritin family. As to quaternary structure, oligomer of 24 subunits. The functional molecule is roughly spherical and contains a central cavity into which the polymeric mineral iron core is deposited.

It carries out the reaction 4 Fe(2+) + O2 + 4 H(+) = 4 Fe(3+) + 2 H2O. Its function is as follows. Stores iron in a soluble, non-toxic, readily available form. Important for iron homeostasis. Has ferroxidase activity. Iron is taken up in the ferrous form and deposited as ferric hydroxides after oxidation. The polypeptide is Ferritin, higher subunit (Aquarana catesbeiana (American bullfrog)).